Consider the following 151-residue polypeptide: Small ribosomal subunit protein uS15z (151 aa).

The protein belongs to the universal ribosomal protein uS15 family.

In Oryza sativa subsp. japonica (Rice), this protein is Small ribosomal subunit protein uS15z.